The chain runs to 120 residues: Large ribosomal subunit protein bL17 (120 aa).

Belongs to the bacterial ribosomal protein bL17 family. In terms of assembly, part of the 50S ribosomal subunit. Contacts protein L32.

This chain is Large ribosomal subunit protein bL17, found in Shouchella clausii (strain KSM-K16) (Alkalihalobacillus clausii).